We begin with the raw amino-acid sequence, 254 residues long: tRNA (guanine-N(1)-)-methyltransferase (254 aa).

S-adenosyl-L-methionine contacts are provided by residues glycine 114 and 134–139 (IGDYVL).

This sequence belongs to the RNA methyltransferase TrmD family. In terms of assembly, homodimer.

The protein localises to the cytoplasm. The enzyme catalyses guanosine(37) in tRNA + S-adenosyl-L-methionine = N(1)-methylguanosine(37) in tRNA + S-adenosyl-L-homocysteine + H(+). Functionally, specifically methylates guanosine-37 in various tRNAs. This is tRNA (guanine-N(1)-)-methyltransferase from Desulforamulus reducens (strain ATCC BAA-1160 / DSM 100696 / MI-1) (Desulfotomaculum reducens).